Here is a 349-residue protein sequence, read N- to C-terminus: UDP-N-acetylenolpyruvoylglucosamine reductase (349 aa).

The FAD-binding PCMH-type domain maps to G25–Q197. The active site involves R173. The active-site Proton donor is the S249. E345 is a catalytic residue.

The protein belongs to the MurB family. Requires FAD as cofactor.

It localises to the cytoplasm. The catalysed reaction is UDP-N-acetyl-alpha-D-muramate + NADP(+) = UDP-N-acetyl-3-O-(1-carboxyvinyl)-alpha-D-glucosamine + NADPH + H(+). The protein operates within cell wall biogenesis; peptidoglycan biosynthesis. Functionally, cell wall formation. The protein is UDP-N-acetylenolpyruvoylglucosamine reductase of Burkholderia cenocepacia (strain HI2424).